The following is a 158-amino-acid chain: uncharacterized protein (158 aa).

A run of 3 helical transmembrane segments spans residues 45 to 65 (GIFF…PAVI), 76 to 96 (LAIG…IFAW), and 106 to 126 (FILV…VFAL).

This sequence to U.parvum UU007, UU041 and UU042.

Its subcellular location is the cell membrane. This is an uncharacterized protein from Ureaplasma parvum serovar 3 (strain ATCC 700970).